Here is a 361-residue protein sequence, read N- to C-terminus: Phospho-N-acetylmuramoyl-pentapeptide-transferase (361 aa).

Transmembrane regions (helical) follow at residues 27-47, 72-92, 99-119, 139-159, 169-189, 200-220, 240-260, 264-284, 289-309, and 338-358; these read GALFTAGLFVFWFGPWIISLL, TPTMGGLMILAGLLVAVLLWA, VWITVVVTLGFGAIGFYDDYL, ALIAVAACVAVAEYSAPGLAY, AIVNLGLFWILFASFVIVGAG, GLAIVPVMIAAATFGIIAYLV, LAVVCGALIGAGLGFLWFNAP, IFMGDTGSLALGGLLGTVAVA, IVLAVVGGLFVLEIASVIIQV, and QVVIRFWIIAVVLALLGLATL.

It belongs to the glycosyltransferase 4 family. MraY subfamily. Mg(2+) serves as cofactor.

It localises to the cell inner membrane. It carries out the reaction UDP-N-acetyl-alpha-D-muramoyl-L-alanyl-gamma-D-glutamyl-meso-2,6-diaminopimeloyl-D-alanyl-D-alanine + di-trans,octa-cis-undecaprenyl phosphate = di-trans,octa-cis-undecaprenyl diphospho-N-acetyl-alpha-D-muramoyl-L-alanyl-D-glutamyl-meso-2,6-diaminopimeloyl-D-alanyl-D-alanine + UMP. It participates in cell wall biogenesis; peptidoglycan biosynthesis. In terms of biological role, catalyzes the initial step of the lipid cycle reactions in the biosynthesis of the cell wall peptidoglycan: transfers peptidoglycan precursor phospho-MurNAc-pentapeptide from UDP-MurNAc-pentapeptide onto the lipid carrier undecaprenyl phosphate, yielding undecaprenyl-pyrophosphoryl-MurNAc-pentapeptide, known as lipid I. The polypeptide is Phospho-N-acetylmuramoyl-pentapeptide-transferase (Methylobacterium nodulans (strain LMG 21967 / CNCM I-2342 / ORS 2060)).